Reading from the N-terminus, the 393-residue chain is Bifunctional enzyme IspD/IspF (393 aa).

A 2-C-methyl-D-erythritol 4-phosphate cytidylyltransferase region spans residues 1–234; it reads MTTSQRTAAI…ARLAASLGDI (234 aa). The tract at residues 235–393 is 2-C-methyl-D-erythritol 2,4-cyclodiphosphate synthase; that stretch reads RTGTGYDVHA…SATIRLPWGA (159 aa). 2 residues coordinate a divalent metal cation: aspartate 241 and histidine 243. Residues 241–243 and 267–268 each bind 4-CDP-2-C-methyl-D-erythritol 2-phosphate; these read DVH and HS. Position 275 (histidine 275) interacts with a divalent metal cation. Residues 289–291, 365–368, phenylalanine 372, and arginine 375 contribute to the 4-CDP-2-C-methyl-D-erythritol 2-phosphate site; these read DIG and TTSE.

The protein in the N-terminal section; belongs to the IspD/TarI cytidylyltransferase family. IspD subfamily. It in the C-terminal section; belongs to the IspF family. Requires a divalent metal cation as cofactor.

The catalysed reaction is 2-C-methyl-D-erythritol 4-phosphate + CTP + H(+) = 4-CDP-2-C-methyl-D-erythritol + diphosphate. It catalyses the reaction 4-CDP-2-C-methyl-D-erythritol 2-phosphate = 2-C-methyl-D-erythritol 2,4-cyclic diphosphate + CMP. It functions in the pathway isoprenoid biosynthesis; isopentenyl diphosphate biosynthesis via DXP pathway; isopentenyl diphosphate from 1-deoxy-D-xylulose 5-phosphate: step 2/6. The protein operates within isoprenoid biosynthesis; isopentenyl diphosphate biosynthesis via DXP pathway; isopentenyl diphosphate from 1-deoxy-D-xylulose 5-phosphate: step 4/6. In terms of biological role, bifunctional enzyme that catalyzes the formation of 4-diphosphocytidyl-2-C-methyl-D-erythritol from CTP and 2-C-methyl-D-erythritol 4-phosphate (MEP) (IspD), and catalyzes the conversion of 4-diphosphocytidyl-2-C-methyl-D-erythritol 2-phosphate (CDP-ME2P) to 2-C-methyl-D-erythritol 2,4-cyclodiphosphate (ME-CPP) with a corresponding release of cytidine 5-monophosphate (CMP) (IspF). The chain is Bifunctional enzyme IspD/IspF from Bradyrhizobium sp. (strain ORS 278).